Reading from the N-terminus, the 1701-residue chain is Merozoite surface protein 1 (1701 aa).

A signal peptide spans 1–19 (MKIIFFLCSFLFFIINTQC). Residues 89–100 (GSGGSVASGGSG) show a composition bias toward gly residues. The tract at residues 89 to 118 (GSGGSVASGGSGNSRRTNPSDNSSDSNTKT) is disordered. Over residues 101–116 (NSRRTNPSDNSSDSNT) the composition is skewed to low complexity. N-linked (GlcNAc...) asparagine glycans are attached at residues Asn-110 and Asn-239. The interval 322–344 (DAENPTTGSKPNPLPENKKKEVE) is disordered. Asn-470, Asn-536, and Asn-607 each carry an N-linked (GlcNAc...) asparagine glycan. Residues 704-739 (SETTEDGGHSTHTLSQSGETEVTEETEVTEETVGHT) are disordered. The span at 724–733 (EVTEETEVTE) shows a compositional bias: acidic residues. Residues Asn-802, Asn-899, Asn-919, Asn-965, Asn-991, Asn-1089, and Asn-1196 are each glycosylated (N-linked (GlcNAc...) asparagine). Residues 889-927 (TGTSSTSSPGNTTVNTAQSATHSNSQNQQSNASSTNTQN) show a composition bias toward low complexity. The interval 889–936 (TGTSSTSSPGNTTVNTAQSATHSNSQNQQSNASSTNTQNGVAVSSGPA) is disordered. 2 disordered regions span residues 1230-1259 (TPPQ…TQIP) and 1451-1472 (KEKF…DEQK). The span at 1245–1259 (VSGSSGSTKEETQIP) shows a compositional bias: polar residues. Residues 1456–1465 (SSPPTTPPSP) show a composition bias toward pro residues. A glycan (N-linked (GlcNAc...) asparagine) is linked at Asn-1588. 2 consecutive EGF-like domains span residues 1592 to 1632 (HQCV…VENP) and 1633 to 1680 (NPTC…IFCS). 6 disulfide bridges follow: Cys-1594–Cys-1605, Cys-1599–Cys-1615, Cys-1617–Cys-1628, Cys-1636–Cys-1649, Cys-1643–Cys-1663, and Cys-1665–Cys-1679. The GPI-anchor amidated serine moiety is linked to residue Ser-1680. Residues 1681 to 1701 (SSNFLGISFLLILMLILYSFI) constitute a propeptide, removed in mature form.

Forms a complex composed of subunits p83, p30, p38, and p42 which remain non-covalently associated; the complex is formed at the merozoite surface prior to egress from host erythrocytes. Forms a complex composed of processed MSP1 subunits, MSP6 subunit p36 and MSP7; the complex is formed at the merozoite surface prior to egress from host erythrocytes. Within the complex, interacts (via subunit p38) with MSP6 subunit p36 and (via subunits p83, p30 and p38) with MSP7 (via subunit p22). Forms a complex composed of MSP1, MSP6, DBLMSP1 and DBLMSP2. Within the complex, interacts (via subunit p38) with DBLMSP1 and DBLMSP2. Forms a complex composed of MSP1, and rhoptry proteins RhopH3, RAP1 and CLAG9/RhopH3. Within the complex, interacts (via subunits p42 and p19) with RhopH3 (via C-terminus). Forms a complex composed of MSP1, MSP6, MSP7, MSP9 and MSP3; within the complex, MSP6 and MSP9 mediate the binding to the host erythrocyte. Interacts (via subunits p19 and p42) with MSP9; the interaction is direct; MSP1 subunits p19 or p42, and MSP9 form a co-ligand complex that interacts with host SLC4A1/Band 3 protein. May interact with PFD6. Interacts with host spectrin. In terms of assembly, interacts with host glycophorin GYPA in a sialic acid-independent manner. As to quaternary structure, interacts with host proinflammatory cytokine S100P; the interaction blocks S100P inflammatory and chemotactic activities. Interacts with host SLC4A1/Band 3 (via 5ABC region) on the host erythrocyte surface in a sialic acid-independent manner. In terms of processing, the p190 precursor is cleaved by SUB1 prior to merozoite egress into 4 subunits p83, p30, p38, and p42 which remain non-covalently associated. SUB1-mediated proteolytic cleavage occurs in an orderly manner; the first cleavage occurs at the p30/p38 site, followed by cleavage at the p83/p30 site, the last cleavage occurs at the p38/p42 site. The order of cleavage is essential for parasite viability. SUB1-mediated processing is essential for merozoite egress. In a second processing step during erythrocyte invasion, p42 is cleaved by SUB2 into p33 and p19; the latter remains attached to the merozoite surface via its GPI-anchor and is endocytosed during the subsequent ring stage.

The protein resides in the cell membrane. Its subcellular location is the secreted. It localises to the vacuole membrane. Its function is as follows. During the asexual blood stage, involved in merozoite egress from host erythrocytes possibly via its interaction with the host cytoskeleton protein spectrin resulting in the destabilization of the host cytoskeleton and thus leading to erythrocyte cell membrane rupture. Involved in the binding to host erythrocytes and is required for host erythrocyte invasion. By binding to host proinflammatory cytokine S100P may interfere with host immune responses. Functionally, involved in merozoite invasion of host erythrocytes. May play a role in the biogenesis and/or function of the food vacuole during the intraerythrocytic development. The chain is Merozoite surface protein 1 from Plasmodium falciparum (isolate mad20 / Papua New Guinea).